The chain runs to 328 residues: Probable E3 ubiquitin-protein ligase RHC1A (328 aa).

Serine 2 is subject to N-acetylserine. The RING-type; atypical zinc-finger motif lies at 190-231 (CPVCKDEFELGSEAKQMPCNHIYHSDCIVPWLVQHNSCPVCR). Residues 233-324 (ELPSASGPSS…QQSYMGYSGW (92 aa)) are disordered. Residues 238–250 (SGPSSSQNRTTPT) show a composition bias toward polar residues. 2 stretches are compositionally biased toward low complexity: residues 251-266 (RNYRSSSSSSSSNSRE) and 275-290 (FSSFWPFRSSGSSSSS). Residues 291 to 300 (TQNRGGTRNS) are compositionally biased toward polar residues.

It carries out the reaction S-ubiquitinyl-[E2 ubiquitin-conjugating enzyme]-L-cysteine + [acceptor protein]-L-lysine = [E2 ubiquitin-conjugating enzyme]-L-cysteine + N(6)-ubiquitinyl-[acceptor protein]-L-lysine.. Its pathway is protein modification; protein ubiquitination. Its function is as follows. Probable E3 ubiquitin-protein ligase that may possess E3 ubiquitin ligase activity in vitro. The protein is Probable E3 ubiquitin-protein ligase RHC1A of Arabidopsis thaliana (Mouse-ear cress).